A 208-amino-acid chain; its full sequence is AN1-type zinc finger protein 6 (208 aa).

The segment at 8-42 (SQVPMLCSTGCGFYGNPRTNGMCSVCYKEHLQRQN) adopts an A20-type zinc-finger fold. Zn(2+)-binding residues include C14, C18, C30, and C33. Residues 41–110 (QNSSNGRISP…ASSQVDSTSV (70 aa)) form a disordered region. The residue at position 49 (S49) is a Phosphoserine. The span at 54 to 68 (SVTSLSESLPVQCTD) shows a compositional bias: polar residues. The segment covering 83-94 (SSVQPSPVSNQS) has biased composition (low complexity). A compositionally biased stretch (polar residues) spans 95-110 (LLSESVASSQVDSTSV). Residues 143 to 189 (KQKKNRCFMCRKKVGLTGFECRCGNVYCGVHRYSDVHNCSYNYKADA) form an AN1-type zinc finger. The Zn(2+) site is built by C149, C152, C163, C165, C170, H173, H179, and C181. K204 is modified (N6-acetyllysine).

In terms of assembly, interacts with PKN1.

The protein is AN1-type zinc finger protein 6 (ZFAND6) of Bos taurus (Bovine).